We begin with the raw amino-acid sequence, 90 residues long: Large ribosomal subunit protein bL27 (90 aa).

The disordered stretch occupies residues 1–21 (MAHKKAGGSSRNGRDSHGKRL).

Belongs to the bacterial ribosomal protein bL27 family.

This Nitrobacter winogradskyi (strain ATCC 25391 / DSM 10237 / CIP 104748 / NCIMB 11846 / Nb-255) protein is Large ribosomal subunit protein bL27.